Here is a 413-residue protein sequence, read N- to C-terminus: Arginine biosynthesis bifunctional protein ArgJ (413 aa).

T158, K184, T195, E285, N408, and S413 together coordinate substrate. T195 (nucleophile) is an active-site residue.

Belongs to the ArgJ family. Heterotetramer of two alpha and two beta chains.

It is found in the cytoplasm. The enzyme catalyses N(2)-acetyl-L-ornithine + L-glutamate = N-acetyl-L-glutamate + L-ornithine. The catalysed reaction is L-glutamate + acetyl-CoA = N-acetyl-L-glutamate + CoA + H(+). Its pathway is amino-acid biosynthesis; L-arginine biosynthesis; L-ornithine and N-acetyl-L-glutamate from L-glutamate and N(2)-acetyl-L-ornithine (cyclic): step 1/1. It functions in the pathway amino-acid biosynthesis; L-arginine biosynthesis; N(2)-acetyl-L-ornithine from L-glutamate: step 1/4. Functionally, catalyzes two activities which are involved in the cyclic version of arginine biosynthesis: the synthesis of N-acetylglutamate from glutamate and acetyl-CoA as the acetyl donor, and of ornithine by transacetylation between N(2)-acetylornithine and glutamate. In Bradyrhizobium diazoefficiens (strain JCM 10833 / BCRC 13528 / IAM 13628 / NBRC 14792 / USDA 110), this protein is Arginine biosynthesis bifunctional protein ArgJ.